Consider the following 292-residue polypeptide: 4-hydroxy-tetrahydrodipicolinate synthase (292 aa).

Thr-45 contributes to the pyruvate binding site. Residue Tyr-133 is the Proton donor/acceptor of the active site. The Schiff-base intermediate with substrate role is filled by Lys-161. Residue Ile-203 coordinates pyruvate.

The protein belongs to the DapA family. As to quaternary structure, homodimer.

Its subcellular location is the cytoplasm. The enzyme catalyses L-aspartate 4-semialdehyde + pyruvate = (2S,4S)-4-hydroxy-2,3,4,5-tetrahydrodipicolinate + H2O + H(+). It participates in amino-acid biosynthesis; L-lysine biosynthesis via DAP pathway; (S)-tetrahydrodipicolinate from L-aspartate: step 3/4. Functionally, catalyzes the condensation of (S)-aspartate-beta-semialdehyde [(S)-ASA] and pyruvate to 4-hydroxy-tetrahydrodipicolinate (HTPA). This is 4-hydroxy-tetrahydrodipicolinate synthase from Pseudomonas savastanoi pv. phaseolicola (strain 1448A / Race 6) (Pseudomonas syringae pv. phaseolicola (strain 1448A / Race 6)).